The primary structure comprises 237 residues: MHTNGPVFAGWDGSVIQAQQLQQQLAQRVLLHDEVSATPQLLAGFDVGFEDDGQSTRAAAVLLDAHTLLPLETHVARVPTSMPYVPGLLSFRELPALLQALALLSRTPDLVFIDGQGIAHPRRLGIAAHFGVVTGLPCIGIAKQRLAGSFAEPGPERGDHTPILLGGAQIGWALRSKPRCNPLIVSPGHRVSMQGALGWTLRTLRSYRLPEPTRLADRLASRRGKMPALAADTPLLF.

Asp-46 and Asp-114 together coordinate Mg(2+).

The protein belongs to the endonuclease V family. Mg(2+) is required as a cofactor.

The protein resides in the cytoplasm. It carries out the reaction Endonucleolytic cleavage at apurinic or apyrimidinic sites to products with a 5'-phosphate.. DNA repair enzyme involved in the repair of deaminated bases. Selectively cleaves double-stranded DNA at the second phosphodiester bond 3' to a deoxyinosine leaving behind the intact lesion on the nicked DNA. The sequence is that of Endonuclease V from Xanthomonas oryzae pv. oryzae (strain PXO99A).